Reading from the N-terminus, the 136-residue chain is Cytochrome c-550 (136 aa).

Positions 1–28 (MTKLTFGALVALAMTAAASTAMSSKAMA) are cleaved as a signal peptide. Heme c contacts are provided by cysteine 41, cysteine 44, histidine 45, and methionine 107.

In terms of processing, binds 1 heme c group covalently per subunit. The N-terminus is blocked.

Its subcellular location is the periplasm. Functionally, plays a role in bacteroid respiration under conditions of oxygen limitation. Required for electron-transfer during denitrification. This is Cytochrome c-550 (cycA) from Bradyrhizobium diazoefficiens (strain JCM 10833 / BCRC 13528 / IAM 13628 / NBRC 14792 / USDA 110).